The chain runs to 181 residues: NADH-quinone oxidoreductase subunit I (181 aa).

2 consecutive 4Fe-4S ferredoxin-type domains span residues 44-74 (LNRYPDGLEKCIGCELCAWACPADAIYVEGA) and 90-119 (RVYQINYLRCIGCGLCIEACPTRALTMTND). [4Fe-4S] cluster contacts are provided by C54, C57, C60, C64, C99, C102, C105, and C109.

The protein belongs to the complex I 23 kDa subunit family. In terms of assembly, NDH-1 is composed of 14 different subunits. Subunits NuoA, H, J, K, L, M, N constitute the membrane sector of the complex. The cofactor is [4Fe-4S] cluster.

The protein localises to the cell membrane. It carries out the reaction a quinone + NADH + 5 H(+)(in) = a quinol + NAD(+) + 4 H(+)(out). Functionally, NDH-1 shuttles electrons from NADH, via FMN and iron-sulfur (Fe-S) centers, to quinones in the respiratory chain. The immediate electron acceptor for the enzyme in this species is believed to be menaquinone. Couples the redox reaction to proton translocation (for every two electrons transferred, four hydrogen ions are translocated across the cytoplasmic membrane), and thus conserves the redox energy in a proton gradient. The sequence is that of NADH-quinone oxidoreductase subunit I from Mycobacterium marinum (strain ATCC BAA-535 / M).